The chain runs to 403 residues: Na(+)-translocating NADH-quinone reductase subunit B (403 aa).

A run of 9 helical transmembrane segments spans residues 56-76, 121-141, 164-184, 225-245, 260-280, 287-307, 312-332, 348-368, and 371-391; these read MMII…YNVG, AYFL…EVLF, LPPS…VVLG, GFAG…NILG, GSMG…LLLT, IVAG…AIGS, MFAM…GMIF, WLFG…NPAF, and GMML…HFVV. The residue at position 230 (T230) is an FMN phosphoryl threonine.

This sequence belongs to the NqrB/RnfD family. In terms of assembly, composed of six subunits; NqrA, NqrB, NqrC, NqrD, NqrE and NqrF. FMN is required as a cofactor.

The protein localises to the cell inner membrane. It catalyses the reaction a ubiquinone + n Na(+)(in) + NADH + H(+) = a ubiquinol + n Na(+)(out) + NAD(+). Functionally, NQR complex catalyzes the reduction of ubiquinone-1 to ubiquinol by two successive reactions, coupled with the transport of Na(+) ions from the cytoplasm to the periplasm. NqrA to NqrE are probably involved in the second step, the conversion of ubisemiquinone to ubiquinol. This is Na(+)-translocating NADH-quinone reductase subunit B from Pseudomonas paraeruginosa (strain DSM 24068 / PA7) (Pseudomonas aeruginosa (strain PA7)).